The sequence spans 271 residues: Phosphatidylglycerol--prolipoprotein diacylglyceryl transferase (271 aa).

Helical transmembrane passes span 21-41, 60-80, 95-115, 124-144, 176-196, 203-223, and 230-250; these read ISVR…MWLA, LLFA…VLFY, VWTG…AMLW, FFGV…VGRL, SQLY…NWFI, GSVS…VEYV, and LGLF…MIIG. Arginine 143 provides a ligand contact to a 1,2-diacyl-sn-glycero-3-phospho-(1'-sn-glycerol).

It belongs to the Lgt family.

The protein resides in the cell inner membrane. The enzyme catalyses L-cysteinyl-[prolipoprotein] + a 1,2-diacyl-sn-glycero-3-phospho-(1'-sn-glycerol) = an S-1,2-diacyl-sn-glyceryl-L-cysteinyl-[prolipoprotein] + sn-glycerol 1-phosphate + H(+). It functions in the pathway protein modification; lipoprotein biosynthesis (diacylglyceryl transfer). Catalyzes the transfer of the diacylglyceryl group from phosphatidylglycerol to the sulfhydryl group of the N-terminal cysteine of a prolipoprotein, the first step in the formation of mature lipoproteins. This is Phosphatidylglycerol--prolipoprotein diacylglyceryl transferase from Vibrio vulnificus (strain CMCP6).